The chain runs to 356 residues: Tyrosinase P (356 aa).

Residues 1–19 form the signal peptide; the sequence is MGFYRNLVLVAASCTQALG. An N-linked (GlcNAc...) asparagine glycan is attached at N81. Positions 87 and 96 each coordinate Cu cation. 2 N-linked (GlcNAc...) asparagine glycosylation sites follow: N148 and N193. Residue H203 coordinates Cu cation. N-linked (GlcNAc...) asparagine glycosylation is present at N226. Cu cation-binding residues include H263 and H286. A glycan (N-linked (GlcNAc...) asparagine) is linked at N309.

Belongs to the tyrosinase family. Cu(2+) is required as a cofactor. Post-translationally, glycosylated.

It localises to the endoplasmic reticulum lumen. Its subcellular location is the golgi apparatus lumen. The catalysed reaction is aspulvinone E + O2 = (5Z)-3-(3,4-dihydroxyphenyl)-5-[(3,4-dihydroxyphenyl)methylidene]-5-oxo-2,5-dihydrofuran-3-olate. It catalyses the reaction aspulvinone E + O2 = (2Z)-2-[(3,4-dioxocyclohexa-1,5-dien-1-yl)methylidene]-4-(4-hydroxyphenyl)-5-oxo-2,5-dihydrofuran-3-olate + H2O. With respect to regulation, activity is inhibited by the presence of dithiothreitol (DTT). Tyrosinase; part of the gene cluster that mediates the biosynthesis of Asp-melanin, a pigment that confers resistance against UV light and hampers phagocytosis by soil amoeba. The nonribosomal peptide synthase melA converts 4-hydroxyphenylpyruvate (4-HPPA) to aspulvinone E. The tyrosinase tyrP then performs hydroxylations of both aromatic moieties of aspulvinone E. The product of tyrP is highly unstable, and, due to the high reactivity of methides and ortho-diquinones, the polymeric Asp-melanin forms spontaneously. In Aspergillus terreus, this protein is Tyrosinase P (tyrP).